Consider the following 210-residue polypeptide: UPF0301 protein CPS_1252 (210 aa).

The protein belongs to the UPF0301 (AlgH) family.

In Colwellia psychrerythraea (strain 34H / ATCC BAA-681) (Vibrio psychroerythus), this protein is UPF0301 protein CPS_1252.